Consider the following 42-residue polypeptide: Photosystem II reaction center protein J (42 aa).

A helical membrane pass occupies residues 10–30; sequence IPLWLIGTVVGSLAIGLLAIF.

Belongs to the PsbJ family. PSII is composed of 1 copy each of membrane proteins PsbA, PsbB, PsbC, PsbD, PsbE, PsbF, PsbH, PsbI, PsbJ, PsbK, PsbL, PsbM, PsbT, PsbX, PsbY, PsbZ, Psb30/Ycf12, at least 3 peripheral proteins of the oxygen-evolving complex and a large number of cofactors. It forms dimeric complexes.

The protein localises to the plastid. Its subcellular location is the chloroplast thylakoid membrane. Functionally, one of the components of the core complex of photosystem II (PSII). PSII is a light-driven water:plastoquinone oxidoreductase that uses light energy to abstract electrons from H(2)O, generating O(2) and a proton gradient subsequently used for ATP formation. It consists of a core antenna complex that captures photons, and an electron transfer chain that converts photonic excitation into a charge separation. In Stigeoclonium helveticum (Green alga), this protein is Photosystem II reaction center protein J.